We begin with the raw amino-acid sequence, 227 residues long: Ribose-5-phosphate isomerase A (227 aa).

Substrate contacts are provided by residues 26–29, 82–85, and 95–98; these read TGST, DGAD, and KGGG. Glutamate 104 functions as the Proton acceptor in the catalytic mechanism. Residue lysine 122 participates in substrate binding.

This sequence belongs to the ribose 5-phosphate isomerase family. In terms of assembly, homodimer.

The enzyme catalyses aldehydo-D-ribose 5-phosphate = D-ribulose 5-phosphate. The protein operates within carbohydrate degradation; pentose phosphate pathway; D-ribose 5-phosphate from D-ribulose 5-phosphate (non-oxidative stage): step 1/1. Catalyzes the reversible conversion of ribose-5-phosphate to ribulose 5-phosphate. In Streptococcus pyogenes serotype M5 (strain Manfredo), this protein is Ribose-5-phosphate isomerase A.